Here is a 214-residue protein sequence, read N- to C-terminus: MSRLGIFGGTFDPIHHGHLIVAEVLKEELQLSRVLFLPAGQPPHKIGRPITPIAHRLAMLQLALQGNPHFAISYVDVRRPGPCYTVDSLTLLRREYSDAELVFLMGEDSLHDLPTWHEPNRIAELALLGVALRPGIEVDLQTIFARVPAARDRVILVPVPLIQIAASDIRRRVAEGRTIRYQVPLVVEEYIARHGLYRTVEAMMPTMTPRTSGV.

It belongs to the NadD family.

It carries out the reaction nicotinate beta-D-ribonucleotide + ATP + H(+) = deamido-NAD(+) + diphosphate. It participates in cofactor biosynthesis; NAD(+) biosynthesis; deamido-NAD(+) from nicotinate D-ribonucleotide: step 1/1. Functionally, catalyzes the reversible adenylation of nicotinate mononucleotide (NaMN) to nicotinic acid adenine dinucleotide (NaAD). The sequence is that of Probable nicotinate-nucleotide adenylyltransferase from Thermomicrobium roseum (strain ATCC 27502 / DSM 5159 / P-2).